Reading from the N-terminus, the 377-residue chain is Dihydroorotate dehydrogenase (quinone) (377 aa).

Residues 68-72 and T92 contribute to the FMN site; that span reads AGFDK. K72 is a binding site for substrate. 117 to 121 provides a ligand contact to substrate; sequence NRMGF. FMN-binding residues include N149 and N182. Residue N182 participates in substrate binding. Catalysis depends on S185, which acts as the Nucleophile. Substrate is bound at residue N187. FMN contacts are provided by K224 and T252. 253 to 254 contacts substrate; sequence NT. FMN is bound by residues G278, G307, and 328-329; that span reads YT.

The protein belongs to the dihydroorotate dehydrogenase family. Type 2 subfamily. In terms of assembly, monomer. FMN is required as a cofactor.

The protein resides in the cell membrane. It carries out the reaction (S)-dihydroorotate + a quinone = orotate + a quinol. It functions in the pathway pyrimidine metabolism; UMP biosynthesis via de novo pathway; orotate from (S)-dihydroorotate (quinone route): step 1/1. Its function is as follows. Catalyzes the conversion of dihydroorotate to orotate with quinone as electron acceptor. In Thermobifida fusca (strain YX), this protein is Dihydroorotate dehydrogenase (quinone).